The chain runs to 300 residues: Ribosomal protein L11 methyltransferase (300 aa).

4 residues coordinate S-adenosyl-L-methionine: T152, G173, D195, and N234.

It belongs to the methyltransferase superfamily. PrmA family.

It is found in the cytoplasm. It catalyses the reaction L-lysyl-[protein] + 3 S-adenosyl-L-methionine = N(6),N(6),N(6)-trimethyl-L-lysyl-[protein] + 3 S-adenosyl-L-homocysteine + 3 H(+). Functionally, methylates ribosomal protein L11. The protein is Ribosomal protein L11 methyltransferase of Cupriavidus necator (strain ATCC 17699 / DSM 428 / KCTC 22496 / NCIMB 10442 / H16 / Stanier 337) (Ralstonia eutropha).